The chain runs to 333 residues: Phosphoribosylformylglycinamidine cyclo-ligase (333 aa).

The protein belongs to the AIR synthase family.

It localises to the cytoplasm. The enzyme catalyses 2-formamido-N(1)-(5-O-phospho-beta-D-ribosyl)acetamidine + ATP = 5-amino-1-(5-phospho-beta-D-ribosyl)imidazole + ADP + phosphate + H(+). It functions in the pathway purine metabolism; IMP biosynthesis via de novo pathway; 5-amino-1-(5-phospho-D-ribosyl)imidazole from N(2)-formyl-N(1)-(5-phospho-D-ribosyl)glycinamide: step 2/2. The chain is Phosphoribosylformylglycinamidine cyclo-ligase from Methanosarcina acetivorans (strain ATCC 35395 / DSM 2834 / JCM 12185 / C2A).